A 219-amino-acid polypeptide reads, in one-letter code: Orotate phosphoribosyltransferase (219 aa).

A 5-phospho-alpha-D-ribose 1-diphosphate-binding site is contributed by lysine 26. 34 to 35 (FF) contributes to the orotate binding site. Residues 72 to 73 (YK), arginine 98, lysine 99, lysine 102, histidine 104, and 124 to 132 (DDVITAGTA) each bind 5-phospho-alpha-D-ribose 1-diphosphate. Residues threonine 128 and arginine 156 each coordinate orotate.

The protein belongs to the purine/pyrimidine phosphoribosyltransferase family. PyrE subfamily. Homodimer. It depends on Mg(2+) as a cofactor.

The catalysed reaction is orotidine 5'-phosphate + diphosphate = orotate + 5-phospho-alpha-D-ribose 1-diphosphate. It participates in pyrimidine metabolism; UMP biosynthesis via de novo pathway; UMP from orotate: step 1/2. Catalyzes the transfer of a ribosyl phosphate group from 5-phosphoribose 1-diphosphate to orotate, leading to the formation of orotidine monophosphate (OMP). The protein is Orotate phosphoribosyltransferase of Xanthomonas euvesicatoria pv. vesicatoria (strain 85-10) (Xanthomonas campestris pv. vesicatoria).